The sequence spans 140 residues: Transcription antitermination protein NusB (140 aa).

This sequence belongs to the NusB family.

Functionally, involved in transcription antitermination. Required for transcription of ribosomal RNA (rRNA) genes. Binds specifically to the boxA antiterminator sequence of the ribosomal RNA (rrn) operons. The protein is Transcription antitermination protein NusB of Streptococcus pneumoniae (strain JJA).